A 75-amino-acid chain; its full sequence is UPF0270 protein PP_1747 (75 aa).

It belongs to the UPF0270 family.

The protein is UPF0270 protein PP_1747 of Pseudomonas putida (strain ATCC 47054 / DSM 6125 / CFBP 8728 / NCIMB 11950 / KT2440).